The primary structure comprises 294 residues: UDP-3-O-acyl-N-acetylglucosamine deacetylase (294 aa).

Positions 75, 232, and 236 each coordinate Zn(2+). His-259 serves as the catalytic Proton donor.

Belongs to the LpxC family. The cofactor is Zn(2+).

It catalyses the reaction a UDP-3-O-[(3R)-3-hydroxyacyl]-N-acetyl-alpha-D-glucosamine + H2O = a UDP-3-O-[(3R)-3-hydroxyacyl]-alpha-D-glucosamine + acetate. The protein operates within glycolipid biosynthesis; lipid IV(A) biosynthesis; lipid IV(A) from (3R)-3-hydroxytetradecanoyl-[acyl-carrier-protein] and UDP-N-acetyl-alpha-D-glucosamine: step 2/6. In terms of biological role, catalyzes the hydrolysis of UDP-3-O-myristoyl-N-acetylglucosamine to form UDP-3-O-myristoylglucosamine and acetate, the committed step in lipid A biosynthesis. The chain is UDP-3-O-acyl-N-acetylglucosamine deacetylase from Campylobacter jejuni subsp. jejuni serotype O:23/36 (strain 81-176).